Reading from the N-terminus, the 49-residue chain is Large ribosomal subunit protein bL33 (49 aa).

This sequence belongs to the bacterial ribosomal protein bL33 family.

This Clostridium botulinum (strain ATCC 19397 / Type A) protein is Large ribosomal subunit protein bL33.